The primary structure comprises 230 residues: Urease accessory protein UreE (230 aa).

Basic residues predominate over residues 200 to 210; sequence HAIHSHGTGHT. A disordered region spans residues 200–230; sequence HAIHSHGTGHTHSHDHDHSHSHGDHDHDHKH. A compositionally biased stretch (basic and acidic residues) spans 211–230; that stretch reads HSHDHDHSHSHGDHDHDHKH.

It belongs to the UreE family.

It localises to the cytoplasm. Its function is as follows. Involved in urease metallocenter assembly. Binds nickel. Probably functions as a nickel donor during metallocenter assembly. In Yersinia enterocolitica serotype O:8 / biotype 1B (strain NCTC 13174 / 8081), this protein is Urease accessory protein UreE.